A 119-amino-acid chain; its full sequence is Basic phospholipase A2 (119 aa).

7 cysteine pairs are disulfide-bonded: C11-C72, C27-C118, C29-C45, C44-C100, C51-C93, C61-C86, and C79-C91. Residues Y28, G30, and G32 each coordinate Ca(2+). H48 is a catalytic residue. Position 49 (D49) interacts with Ca(2+). N-linked (GlcNAc...) asparagine glycosylation occurs at N82. D94 is a catalytic residue.

It belongs to the phospholipase A2 family. Group I subfamily. D49 sub-subfamily. Requires Ca(2+) as cofactor. Expressed by the venom gland.

The protein resides in the secreted. It carries out the reaction a 1,2-diacyl-sn-glycero-3-phosphocholine + H2O = a 1-acyl-sn-glycero-3-phosphocholine + a fatty acid + H(+). Its function is as follows. Snake venom phospholipase A2 (PLA2) that shows weak myotoxicity and induces edema in mice. Shows no cytotoxicity in vitro. Has an anticoagulant effect in vitro. PLA2 catalyzes the calcium-dependent hydrolysis of the 2-acyl groups in 3-sn-phosphoglycerides. The protein is Basic phospholipase A2 of Micrurus mipartitus (Red-tailed coral snake).